The primary structure comprises 842 residues: Probable vinculin (842 aa).

Residues 585-679 (KEARKRLDDV…AAEEEERKRA (95 aa)) are a coiled coil.

It belongs to the vinculin/alpha-catenin family. In terms of assembly, monomer. Associates with F-actin. Interacts with aarA, ctxA, ctxB and rgaA. As to expression, epithelium.

Its subcellular location is the cytoplasm. It is found in the cell cortex. The protein localises to the cell junction. In terms of biological role, involved in cell adhesion. Thought to play an important role in cytokinesis B, probably by providing substrate adhesion and traction forces. Required to organize and polarize the tip epithelium during cytokinesis. Required for the normal distribution of myosin in the tip epithelium. Involved in the localization of ctxA, ctxB, dcsA, exoc6 and rgaA. Thought to form a complex with ctxA, ctxB, and rgaA which regulates myosin accumulation to the apical plasma membrane. The protein is Probable vinculin (ctnnA) of Dictyostelium discoideum (Social amoeba).